A 180-amino-acid chain; its full sequence is Large ribosomal subunit protein uL16 (180 aa).

It belongs to the universal ribosomal protein uL16 family.

The sequence is that of Large ribosomal subunit protein uL16 from Pyrobaculum aerophilum (strain ATCC 51768 / DSM 7523 / JCM 9630 / CIP 104966 / NBRC 100827 / IM2).